An 836-amino-acid chain; its full sequence is General vesicular transport factor p115 (836 aa).

The interval 1 to 22 is disordered; sequence MEFLKSGIKTVLGSTEPGQQPS. Over residues 12 to 22 the composition is skewed to polar residues; the sequence is LGSTEPGQQPS. 11 ARM repeats span residues 24 to 64, 65 to 124, 126 to 166, 169 to 210, 211 to 256, 316 to 359, 368 to 413, 424 to 463, 477 to 518, 523 to 577, and 579 to 636; these read AETV…VGAQ, GMPP…IKTP, HVTL…LILV, MGVS…VAFE, NAFD…FKEG, RLLH…LGRV, PAIV…QTLL, STGQ…EELL, TLLE…KALL, TMAY…IIKR, and GQES…LVSG. Coiled coils occupy residues 663–707 and 744–806; these read IIRG…DQNT and NMYF…EEAG. The interval 803-836 is disordered; that stretch reads EEAGSTNTLPTSNVAPSVPAAGGGSPIPSGTASR. Residues 806 to 816 are compositionally biased toward polar residues; it reads GSTNTLPTSNV. Over residues 817–836 the composition is skewed to low complexity; sequence APSVPAAGGGSPIPSGTASR.

Belongs to the VDP/USO1/EDE1 family.

The protein localises to the cytoplasm. It localises to the golgi apparatus. Its subcellular location is the golgi stack. It is found in the golgi stack membrane. The protein resides in the endoplasmic reticulum. The protein localises to the endoplasmic reticulum membrane. In terms of biological role, essential for maintaining the architecture of the Golgi stacks and for normal organization of the transitional endoplasmic reticulum (tER). Required for both the formation of the Golgi stacks and the maintenance of the individual cisternae. This Drosophila melanogaster (Fruit fly) protein is General vesicular transport factor p115.